We begin with the raw amino-acid sequence, 338 residues long: Glyceraldehyde-3-phosphate dehydrogenase (338 aa).

NAD(+)-binding positions include 11–12 (TI) and glycine 111. Position 140–142 (140–142 (SCN)) interacts with D-glyceraldehyde 3-phosphate. Cysteine 141 (nucleophile) is an active-site residue. NAD(+) is bound at residue arginine 169. The disordered stretch occupies residues 170–195 (GSDPSEVKKGPINSIVPNPPKVPSHH). 195 to 196 (HG) is a binding site for D-glyceraldehyde 3-phosphate. Glutamine 302 contributes to the NAD(+) binding site.

The protein belongs to the glyceraldehyde-3-phosphate dehydrogenase family. In terms of assembly, homotetramer.

The protein resides in the cytoplasm. The enzyme catalyses D-glyceraldehyde 3-phosphate + phosphate + NADP(+) = (2R)-3-phospho-glyceroyl phosphate + NADPH + H(+). The catalysed reaction is D-glyceraldehyde 3-phosphate + phosphate + NAD(+) = (2R)-3-phospho-glyceroyl phosphate + NADH + H(+). Its pathway is carbohydrate degradation; glycolysis; pyruvate from D-glyceraldehyde 3-phosphate: step 1/5. This is Glyceraldehyde-3-phosphate dehydrogenase from Methanobrevibacter smithii (strain ATCC 35061 / DSM 861 / OCM 144 / PS).